A 184-amino-acid polypeptide reads, in one-letter code: MDLQAAGAQAQGAAEPSRGPPLPSARGAPPSPEAGFATADHSSQERETEKAMDRLARGTQSIPNDSPARGEGTHSEEEGFAMDEEDSDGELNTWELSEGTNCPPKEQPGDLFNEDWDSELKADQGNPYDADDIQESISQELKPWVCCAPQGDMIYDPSWHHPPPLIPYYSKMVFETGQFDDAED.

Residue Met-1 is modified to N-acetylmethionine. Over residues 1-14 (MDLQAAGAQAQGAA) the composition is skewed to low complexity. Residues 1–136 (MDLQAAGAQA…PYDADDIQES (136 aa)) are disordered. Residues 42–56 (SSQERETEKAMDRLA) are compositionally biased toward basic and acidic residues. Phosphoserine is present on residues Ser-66 and Ser-75. A compositionally biased stretch (acidic residues) spans 78–89 (EGFAMDEEDSDG).

In terms of assembly, interacts with PRMT5. Interacts with histone H4; specifically interacts with the N-terminus of histone H4 but not with histone H3. Interacts with CBFB. Found in a complex with PRMT5, RUNX1 and CBFB.

It is found in the nucleus. In terms of biological role, histone-binding protein required for histone H4 methyltransferase activity of PRMT5. Specifically required for histone H4 'Arg-3' methylation mediated by PRMT5, but not histone H3 'Arg-8' methylation, suggesting that it modulates the substrate specificity of PRMT5. Specifically interacts with the N-terminus of histone H4 but not with histone H3, suggesting that it acts by promoting the association between histone H4 and PRMT5. Involved in CCNE1 promoter repression. Plays a role in muscle cell differentiation by modulating the recruitment of PRMT5 to the promoter of genes involved in the coordination between cell cycle exit and muscle differentiation. The polypeptide is Coordinator of PRMT5 and differentiation stimulator (COPRS) (Homo sapiens (Human)).